A 712-amino-acid polypeptide reads, in one-letter code: Cyclolysin secretion/processing ATP-binding protein CyaB (712 aa).

Residues 7 to 128 (QCASVPDSGL…ALWAGELLLC (122 aa)) enclose the Peptidase C39 domain. One can recognise an ABC transmembrane type-1 domain in the interval 157–439 (IGEVLLISLV…LAQLWNDFQQ (283 aa)). The next 6 helical transmembrane spans lie at 160 to 180 (VLLI…FFQV), 194 to 214 (LNVI…LTGI), 272 to 292 (AVTV…MFFY), 298 to 318 (LVVL…TPVL), 367 to 387 (VAAG…VTLI), and 390 to 410 (LVAL…RMTV). In terms of domain architecture, ABC transporter spans 471–706 (IELDRVSFRY…GGLYARLQAL (236 aa)). 505 to 512 (GRSGSGKS) is a binding site for ATP.

It belongs to the ABC transporter superfamily. Cyclolysin exporter (TC 3.A.1.109.2) family.

It is found in the cell membrane. In terms of biological role, involved in the export of calmodulin-sensitive adenylate cyclase-hemolysin (cyclolysin). The chain is Cyclolysin secretion/processing ATP-binding protein CyaB (cyaB) from Bordetella pertussis (strain Tohama I / ATCC BAA-589 / NCTC 13251).